The primary structure comprises 175 residues: Ribosome maturation factor RimM (175 aa).

The 80-residue stretch at 96 to 175 (EDEFYWRELF…RIEVDWDPGF (80 aa)) folds into the PRC barrel domain.

The protein belongs to the RimM family. As to quaternary structure, binds ribosomal protein uS19.

It localises to the cytoplasm. Its function is as follows. An accessory protein needed during the final step in the assembly of 30S ribosomal subunit, possibly for assembly of the head region. Essential for efficient processing of 16S rRNA. May be needed both before and after RbfA during the maturation of 16S rRNA. It has affinity for free ribosomal 30S subunits but not for 70S ribosomes. This is Ribosome maturation factor RimM from Aliivibrio fischeri (strain ATCC 700601 / ES114) (Vibrio fischeri).